A 193-amino-acid chain; its full sequence is Large ribosomal subunit protein bL17m (193 aa).

Belongs to the bacterial ribosomal protein bL17 family. In terms of assembly, component of the mitochondrial large ribosomal subunit (mt-LSU). Mature N.crassa 74S mitochondrial ribosomes consist of a small (37S) and a large (54S) subunit. The 37S small subunit contains a 16S ribosomal RNA (16S mt-rRNA) and 32 different proteins. The 54S large subunit contains a 23S rRNA (23S mt-rRNA) and 42 different proteins.

It is found in the mitochondrion. Functionally, component of the mitochondrial ribosome (mitoribosome), a dedicated translation machinery responsible for the synthesis of mitochondrial genome-encoded proteins, including at least some of the essential transmembrane subunits of the mitochondrial respiratory chain. The mitoribosomes are attached to the mitochondrial inner membrane and translation products are cotranslationally integrated into the membrane. This chain is Large ribosomal subunit protein bL17m (mrpl8), found in Neurospora crassa (strain ATCC 24698 / 74-OR23-1A / CBS 708.71 / DSM 1257 / FGSC 987).